A 124-amino-acid chain; its full sequence is Riboflavin kinase (124 aa).

10–15 contributes to the CDP binding site; sequence GLGKAA. Residues Thr39 and Asn41 each contribute to the Mg(2+) site. Residues Thr93 and Glu101 each contribute to the FMN site. A CDP-binding site is contributed by 106-109; sequence DKLR.

Belongs to the archaeal riboflavin kinase family. Mg(2+) is required as a cofactor.

The enzyme catalyses riboflavin + CTP = CDP + FMN + H(+). Its pathway is cofactor biosynthesis; FMN biosynthesis; FMN from riboflavin (CTP route): step 1/1. Its function is as follows. Catalyzes the CTP-dependent phosphorylation of riboflavin (vitamin B2) to form flavin mononucleotide (FMN). The polypeptide is Riboflavin kinase (Methanobrevibacter smithii (strain ATCC 35061 / DSM 861 / OCM 144 / PS)).